The following is a 538-amino-acid chain: Putative cysteine ligase BshC (538 aa).

Positions 460–484 form a coiled coil; sequence KINEQIELLERMLKRNVEKKHEVEL.

This sequence belongs to the BshC family.

In terms of biological role, involved in bacillithiol (BSH) biosynthesis. May catalyze the last step of the pathway, the addition of cysteine to glucosamine malate (GlcN-Mal) to generate BSH. This is Putative cysteine ligase BshC from Bacillus anthracis (strain A0248).